Reading from the N-terminus, the 194-residue chain is Adenylate kinase isoenzyme 1 (194 aa).

19 to 24 (GSGKGT) is a binding site for ATP. The NMP stretch occupies residues 39-68 (STGDLLRAEVSSGSERGKKLQAIMEKGELV). AMP-binding positions include T40, R45, 66–68 (ELV), 95–98 (GYPR), and Q102. The LID stretch occupies residues 132 to 142 (KRGETSGRVDD). Position 133 (R133) interacts with ATP. 2 residues coordinate AMP: R139 and R150. G178 provides a ligand contact to ATP.

It belongs to the adenylate kinase family. AK1 subfamily. Monomer. It depends on Mg(2+) as a cofactor. In terms of tissue distribution, skeletal muscle.

The protein localises to the cytoplasm. It carries out the reaction a ribonucleoside 5'-phosphate + ATP = a ribonucleoside 5'-diphosphate + ADP. The enzyme catalyses AMP + ATP = 2 ADP. The catalysed reaction is dAMP + ATP = dADP + ADP. It catalyses the reaction dATP + AMP = dADP + ADP. It carries out the reaction dAMP + dATP = 2 dADP. The enzyme catalyses a 2'-deoxyribonucleoside 5'-diphosphate + ATP = a 2'-deoxyribonucleoside 5'-triphosphate + ADP. The catalysed reaction is a ribonucleoside 5'-diphosphate + ATP = a ribonucleoside 5'-triphosphate + ADP. It catalyses the reaction CDP + GTP = CTP + GDP. It carries out the reaction GDP + ATP = GTP + ADP. The enzyme catalyses UDP + ATP = UTP + ADP. The catalysed reaction is GTP + UDP = UTP + GDP. It catalyses the reaction dTDP + GTP = dTTP + GDP. It carries out the reaction dCDP + GTP = dCTP + GDP. The enzyme catalyses dGDP + ATP = dGTP + ADP. The catalysed reaction is dADP + GTP = dATP + GDP. It catalyses the reaction thiamine diphosphate + ADP = thiamine triphosphate + AMP. Its function is as follows. Catalyzes the reversible transfer of the terminal phosphate group between ATP and AMP. Also displays broad nucleoside diphosphate kinase activity. Plays an important role in cellular energy homeostasis and in adenine nucleotide metabolism. Also catalyzes at a very low rate the synthesis of thiamine triphosphate (ThTP) from thiamine diphosphate (ThDP) and ADP. In Gallus gallus (Chicken), this protein is Adenylate kinase isoenzyme 1.